The following is a 436-amino-acid chain: Transcription factor Sox-10 (436 aa).

5 disordered regions span residues 1-55 (MSDD…ERFP), 145-183 (RLRM…AEGG), 195-257 (HLDH…DFGN), 322-346 (PQTD…QPST), and 413-436 (SPSV…LSRP). Residue Lys-44 forms a Glycyl lysine isopeptide (Lys-Gly) (interchain with G-Cter in SUMO) linkage. The tract at residues 48–88 (DSEDERFPVCIREAVSQVLSGYDWTLVPMPVRVNGGSKSKP) is dimerization (DIM). The HMG box DNA-binding region spans 90–158 (VKRPMNAFMV…QHKKDHPDYK (69 aa)). Residues 145-159 (RLRMQHKKDHPDYKY) show a composition bias toward basic and acidic residues. Composition is skewed to polar residues over residues 205 to 215 (SDGNSEHSAGQ) and 331 to 346 (KTES…QPST). The interval 209–295 (SEHSAGQSHG…NGHAGHPSHI (87 aa)) is transactivation domain (TAM). The transactivation domain (TAC) stretch occupies residues 327–436 (KAQVKTESSS…QPVYTTLSRP (110 aa)). A Glycyl lysine isopeptide (Lys-Gly) (interchain with G-Cter in SUMO) cross-link involves residue Lys-331.

As to quaternary structure, interacts with the sumoylation factors ube2i/ubc9 and sumo1. In terms of processing, sumoylated.

Its subcellular location is the cytoplasm. It localises to the nucleus. Functionally, acts early in neural crest formation, functioning redundantly with the other group E Sox factors sox8 and sox9 to induce neural crest progenitors. Acts downstream of wnt-signaling at the neural plate border. Involved in the specification of neural crest progenitors fated to form the pigment cell lineage. This chain is Transcription factor Sox-10, found in Xenopus tropicalis (Western clawed frog).